An 85-amino-acid polypeptide reads, in one-letter code: ATP synthase epsilon chain (85 aa).

The protein belongs to the ATPase epsilon chain family. F-type ATPases have 2 components, CF(1) - the catalytic core - and CF(0) - the membrane proton channel. CF(1) has five subunits: alpha(3), beta(3), gamma(1), delta(1), epsilon(1). CF(0) has three main subunits: a, b and c.

The protein localises to the cell membrane. Its function is as follows. Produces ATP from ADP in the presence of a proton gradient across the membrane. The protein is ATP synthase epsilon chain of Frankia casuarinae (strain DSM 45818 / CECT 9043 / HFP020203 / CcI3).